The sequence spans 240 residues: MSLVVCQPQINESFYQKDDMGGLSFLQSMSDITSIAQTKEDKAYVHPMEKRSVSKLNEKSLEMCTESLGTETGSESGDELSLLAFEATTTPRAPPRQLKPQEDTNLPDKTPPMSRNNSFPPPIKFVEDSKYNRMVRWLGEDGRIVVQAIRVSSPPSCFVSERGEGRLRLILTSESSLLSHNHEEEEEEETEEGIDEETSENLEGKSGNKKFSRFSRRCKENGREPKPMLTWKQQQFWVAT.

2 disordered regions span residues 89–124 (TTPR…PPIK) and 177–229 (LLSH…KPML). The FAF domain maps to 117–171 (NSFPPPIKFVEDSKYNRMVRWLGEDGRIVVQAIRVSSPPSCFVSERGEGRLRLIL). Residues 184–200 (EEEEEETEEGIDEETSE) show a composition bias toward acidic residues. Over residues 207–216 (GNKKFSRFSR) the composition is skewed to basic residues. The span at 217 to 226 (RCKENGREPK) shows a compositional bias: basic and acidic residues.

This sequence belongs to the fantastic four family. As to expression, expressed in the shoot apex, stamens, carpels and young siliques. Detected in provascular and vascular tissue, and in the center of the vegetative and inflorescence meristems. Expressed in the funiculus. In roots and leaves, predominantly expressed in phloem.

Its function is as follows. Regulates the size of the shoot meristem by modulating the CLV3-WUS feedback loop. Can repress WUS but is under negative control by CLV3. In Arabidopsis thaliana (Mouse-ear cress), this protein is Protein FANTASTIC FOUR 2 (FAF2).